The sequence spans 262 residues: Mitochondrial calcium uniporter regulator 1 (262 aa).

Residues 138-175 are a coiled coil; the sequence is EKSEFSALRTQNEKVKIELQQLKKQLNDSIVKVRASNK. Residues 239–261 form a helical membrane-spanning segment; sequence TIKYLAGSVFTCLTIALGFYRLW.

The protein belongs to the CCDC90 family.

The protein localises to the mitochondrion inner membrane. In terms of biological role, key regulator of mitochondrial calcium uniporter (mcu) required for calcium entry into mitochondrion. This is Mitochondrial calcium uniporter regulator 1 from Xenopus tropicalis (Western clawed frog).